Consider the following 411-residue polypeptide: Calmodulin-binding receptor-like cytoplasmic kinase 2 (411 aa).

2 disordered regions span residues 1–44 (MPSR…DTTT) and 66–99 (SNYIDNSKSSSDNNIRSRRSSTGSSSVQRSYGNA). 2 stretches are compositionally biased toward low complexity: residues 16-44 (TTSSNYSNTTFTDRSFPTTPARTSTDTTT) and 66-95 (SNYIDNSKSSSDNNIRSRRSSTGSSSVQRS). Thr108 bears the Phosphothreonine mark. A Protein kinase domain is found at 119–398 (FSPSFRIGQG…MKKCSEILWG (280 aa)). ATP contacts are provided by residues 125–133 (IGQGGFGTV) and Lys147. Positions 134–159 (YKVKLRDGKTFAVKRAKKSMHDDRQG) are caM-binding. Residue Asp247 is the Proton acceptor of the active site. 2 positions are modified to phosphoserine: Ser251 and Ser283. Phosphothreonine occurs at positions 284 and 289. At Tyr297 the chain carries Phosphotyrosine.

Belongs to the protein kinase superfamily. Ser/Thr protein kinase family. As to quaternary structure, interacts with calmodulin (CaM) in a Ca(2+)-dependent manner.

The protein resides in the cytoplasm. It carries out the reaction L-seryl-[protein] + ATP = O-phospho-L-seryl-[protein] + ADP + H(+). It catalyses the reaction L-threonyl-[protein] + ATP = O-phospho-L-threonyl-[protein] + ADP + H(+). The chain is Calmodulin-binding receptor-like cytoplasmic kinase 2 (CRCK2) from Arabidopsis thaliana (Mouse-ear cress).